The chain runs to 120 residues: Small ribosomal subunit protein uS10 (120 aa).

Phosphoserine occurs at positions 16 and 18.

Belongs to the universal ribosomal protein uS10 family. As to expression, expressed ubiquitously in embryos, highest expression is in the midgut.

The polypeptide is Small ribosomal subunit protein uS10 (RpS20) (Drosophila melanogaster (Fruit fly)).